Here is a 330-residue protein sequence, read N- to C-terminus: Probable transposase for insertion sequence element ISH11 (330 aa).

The protein belongs to the transposase 11 family.

Functionally, involved in the transposition of the insertion sequence ISH11. This Halobacterium salinarum (strain ATCC 29341 / DSM 671 / R1) protein is Probable transposase for insertion sequence element ISH11.